We begin with the raw amino-acid sequence, 177 residues long: MEERNHENTLEKDLEAVGQEAQALEERLKAAEEELKGLKDKYLRLLADFDNYRKRMEEELKAREREGVLKALRALLPVLDDLDRALEFAEASPESIRQGVRAIRDGFFRILAGLGVEEVPGEGEAFDPRYHEAVGLLPGEPGKVAKVFQRGFRMGEALVRPARVAVGEEKQEEADLE.

It belongs to the GrpE family. In terms of assembly, homodimer.

The protein localises to the cytoplasm. Its function is as follows. Participates actively in the response to hyperosmotic and heat shock by preventing the aggregation of stress-denatured proteins, in association with DnaK and GrpE. It is the nucleotide exchange factor for DnaK and may function as a thermosensor. Unfolded proteins bind initially to DnaJ; upon interaction with the DnaJ-bound protein, DnaK hydrolyzes its bound ATP, resulting in the formation of a stable complex. GrpE releases ADP from DnaK; ATP binding to DnaK triggers the release of the substrate protein, thus completing the reaction cycle. Several rounds of ATP-dependent interactions between DnaJ, DnaK and GrpE are required for fully efficient folding. The protein is Protein GrpE of Thermus thermophilus (strain ATCC BAA-163 / DSM 7039 / HB27).